The sequence spans 90 residues: Spore coat protein F-like protein YgzC (90 aa).

It belongs to the CotF family.

It localises to the spore coat. This chain is Spore coat protein F-like protein YgzC (ygzC), found in Bacillus subtilis (strain 168).